Consider the following 422-residue polypeptide: Keratin, type I cytoskeletal 23 (422 aa).

The segment covering 1–24 has biased composition (polar residues); sequence MNSSHSFNQTYSASVHSLGSTRGR. Residues 1 to 35 are disordered; sequence MNSSHSFNQTYSASVHSLGSTRGRQGSCHRAPSVH. The tract at residues 1 to 71 is head; that stretch reads MNSSHSFNQT…GRSSPLLGGN (71 aa). Positions 72-107 are coil 1A; sequence GKATMQNLNDRLATYLEKVRALEEANSKLETRILRW. An IF rod domain is found at 72 to 382; that stretch reads GKATMQNLND…RLLEGDTEGT (311 aa). Residues 108 to 125 are linker 1; the sequence is HQEREPSHRKDYSQYEEN. The coil 1B stretch occupies residues 126–217; it reads ISRLQEQIVD…KRHEQEMEEN (92 aa). The tract at residues 218-240 is linker 12; sequence HLPSDFKVSVKVDTTPGEDLIKV. Positions 241 to 378 are coil 2; sequence LEDMRQEYEL…ATYRRLLEGD (138 aa). Residues 379–422 form a rod-like helical tail region; that stretch reads TEGTMDGSESRLKGSEASTIKAITQESVNGRIVLSQVNEIQKHI.

The protein belongs to the intermediate filament family. In terms of assembly, heterotetramer of two type I and two type II keratins.

The protein is Keratin, type I cytoskeletal 23 (Krt23) of Mus musculus (Mouse).